The primary structure comprises 384 residues: Putative glutamate--cysteine ligase 2-1 (384 aa).

The protein belongs to the glutamate--cysteine ligase type 2 family. YbdK subfamily.

It catalyses the reaction L-cysteine + L-glutamate + ATP = gamma-L-glutamyl-L-cysteine + ADP + phosphate + H(+). ATP-dependent carboxylate-amine ligase which exhibits weak glutamate--cysteine ligase activity. This Paenarthrobacter aurescens (strain TC1) protein is Putative glutamate--cysteine ligase 2-1.